The sequence spans 313 residues: Olfactory receptor 5H1 (313 aa).

At 1–28 the chain is on the extracellular side; sequence MEEENATLLTEFVLTGFLYQPQWKIPLF. N-linked (GlcNAc...) asparagine glycosylation occurs at asparagine 5. The chain crosses the membrane as a helical span at residues 29–49; that stretch reads LAFLVIYLITIMGNLGLIAVI. Residues 50 to 56 are Cytoplasmic-facing; that stretch reads WKDPHLH. A helical transmembrane segment spans residues 57–77; sequence IPMYLLLGNLAFVDAWISSTV. Residues 78-98 are Extracellular-facing; sequence TPKMLNNFLAKSKMISLSECK. Cysteines 97 and 179 form a disulfide. Residues 99–119 traverse the membrane as a helical segment; the sequence is IQFFSFAISVTTECFLLATMA. The Cytoplasmic segment spans residues 120-143; that stretch reads YDRYVAICKPLLYPAIMTNGLCIR. A helical transmembrane segment spans residues 144–164; the sequence is LLILSYVGGILHALIHEGFLF. The Extracellular segment spans residues 165–195; the sequence is RLTFCNSNIVHHIYCDTIPLSKISCTDSSIN. A helical membrane pass occupies residues 196–216; it reads FLMVFIFSGSIQVFSIVTILV. Residues 217–240 are Cytoplasmic-facing; that stretch reads SYTFVLFAILKKKSDKGVRKAFST. A helical transmembrane segment spans residues 241–261; it reads CGAHLFSVSLYYGPLLFIYVG. Residues 262-271 are Extracellular-facing; it reads PASPQADDQD. A helical membrane pass occupies residues 272-292; that stretch reads MVEPLFYTVIIPLLNPIIYSL. Residues 293 to 313 lie on the Cytoplasmic side of the membrane; it reads RNKQVTVSFTKMLKKHVKVSY.

The protein belongs to the G-protein coupled receptor 1 family.

The protein localises to the cell membrane. In terms of biological role, odorant receptor. This chain is Olfactory receptor 5H1 (OR5H1), found in Homo sapiens (Human).